Consider the following 203-residue polypeptide: Meiotically up-regulated protein PB17E12.09 (203 aa).

Residues 92–177 adopt a coiled-coil conformation; sequence CNRKIEGYIK…KEMQLYMTKI (86 aa).

The protein localises to the cytoplasm. Functionally, has a role in meiosis and sporulation. This Schizosaccharomyces pombe (strain 972 / ATCC 24843) (Fission yeast) protein is Meiotically up-regulated protein PB17E12.09.